The sequence spans 388 residues: 4-hydroxy-3-methylbut-2-en-1-yl diphosphate synthase (flavodoxin) (388 aa).

The disordered stretch occupies residues 1 to 22 (MTSVNLGMPAAPQPVLSPRRKT). The [4Fe-4S] cluster site is built by C281, C284, C316, and E323.

It belongs to the IspG family. The cofactor is [4Fe-4S] cluster.

The catalysed reaction is (2E)-4-hydroxy-3-methylbut-2-enyl diphosphate + oxidized [flavodoxin] + H2O + 2 H(+) = 2-C-methyl-D-erythritol 2,4-cyclic diphosphate + reduced [flavodoxin]. It participates in isoprenoid biosynthesis; isopentenyl diphosphate biosynthesis via DXP pathway; isopentenyl diphosphate from 1-deoxy-D-xylulose 5-phosphate: step 5/6. Functionally, converts 2C-methyl-D-erythritol 2,4-cyclodiphosphate (ME-2,4cPP) into 1-hydroxy-2-methyl-2-(E)-butenyl 4-diphosphate. The chain is 4-hydroxy-3-methylbut-2-en-1-yl diphosphate synthase (flavodoxin) from Kocuria rhizophila (strain ATCC 9341 / DSM 348 / NBRC 103217 / DC2201).